Consider the following 513-residue polypeptide: Flagellin A (513 aa).

Belongs to the bacterial flagellin family. As to quaternary structure, heteromer of FlaA and FlaB. FlaB is located proximal to the hook while the remainder of the filament is composed of the predominant FlaA.

The protein resides in the secreted. The protein localises to the bacterial flagellum. Functionally, flagellin is the subunit protein which polymerizes to form the filaments of bacterial flagella. Important for motility and virulence. This is Flagellin A (flaA) from Helicobacter felis (strain ATCC 49179 / CCUG 28539 / NCTC 12436 / CS1).